A 1856-amino-acid polypeptide reads, in one-letter code: Zinc metalloprotease ZmpC (1856 aa).

The N-terminal stretch at 1–42 (MSRKSIGEKRHSFSMRKLSVGLVSVTVSSFFLMSQGIQSVSA) is a signal peptide. The propeptide occupies 43–95 (DNMESPIHYKYMTEGKLTDEEKSLLVEALPQLAEESDDTYYLVYRSQQFLPNT). The LPXTG sorting signal signature appears at 92 to 96 (LPNTG). Position 95 is a pentaglycyl murein peptidoglycan amidated threonine (T95). A run of 2 helical transmembrane segments spans residues 97 to 117 (FNPT…VLLV) and 130 to 152 (FLLL…TSQI). Residues 153 to 1856 (LSAYNSQLSI…TDDFRNSIYK (1704 aa)) lie on the Extracellular side of the membrane. Composition is skewed to polar residues over residues 254 to 267 (NLSS…QVEQ) and 286 to 295 (NPVSATTVQS). Positions 254-362 (NLSSNDSFAS…GEAAVREEEP (109 aa)) are disordered. Composition is skewed to basic and acidic residues over residues 322–334 (PGHE…REDL) and 351–361 (HEGEAAVREEE). The region spanning 417–496 (ALEVTTRNRT…NEVVKVGTLV (80 aa)) is the G5 domain. H1502 contributes to the Zn(2+) binding site. E1503 is an active-site residue. The Zn(2+) site is built by H1506 and E1526.

It belongs to the peptidase M26 family. Zn(2+) is required as a cofactor. The Gram-positive cell-wall anchor motif LPXTG is located in the N-terminal part, in contrast to such motifs in other known streptococcal and staphylococcal proteins. The protease could be cleaved by the sortase and anchored in the membrane via the two potential N-terminal transmembrane domains, whereas the propeptide located prior to the LPXTG motif would remain attached to the cell wall peptidoglycan by an amide bond.

The protein localises to the secreted. Its subcellular location is the cell wall. It localises to the membrane. In terms of biological role, zinc metalloproteinase that specifically cleaves human matrix metalloproteinase 9 (MMP-9), leading to its activation. May play a role in pneumococcal virulence and pathogenicity in the lung. The protein is Zinc metalloprotease ZmpC (zmpC) of Streptococcus pneumoniae serotype 4 (strain ATCC BAA-334 / TIGR4).